The chain runs to 72 residues: MSDKSIKMQAKVLKMFSTDKYELELLENKVIIKGHISGKMRIHKIRILPGDIVDVEISPHDLSNGRITYRHK.

The S1-like domain maps to 1 to 72 (MSDKSIKMQA…SNGRITYRHK (72 aa)).

This sequence belongs to the IF-1 family. In terms of assembly, component of the 30S ribosomal translation pre-initiation complex which assembles on the 30S ribosome in the order IF-2 and IF-3, IF-1 and N-formylmethionyl-tRNA(fMet); mRNA recruitment can occur at any time during PIC assembly.

It is found in the cytoplasm. In terms of biological role, one of the essential components for the initiation of protein synthesis. Stabilizes the binding of IF-2 and IF-3 on the 30S subunit to which N-formylmethionyl-tRNA(fMet) subsequently binds. Helps modulate mRNA selection, yielding the 30S pre-initiation complex (PIC). Upon addition of the 50S ribosomal subunit IF-1, IF-2 and IF-3 are released leaving the mature 70S translation initiation complex. The protein is Translation initiation factor IF-1 of Mycoplasmopsis pulmonis (strain UAB CTIP) (Mycoplasma pulmonis).